The following is a 213-amino-acid chain: Adenylate kinase (213 aa).

10 to 15 (GAGKGT) serves as a coordination point for ATP. Positions 30–59 (STGDMLRAALKEGTPLGLEAKKYMDQGALV) are NMP. Residues Thr31, Arg36, 57–59 (ALV), 85–88 (GFPR), and Gln92 contribute to the AMP site. Residues 126–163 (GRRTCRSCGAGFHVMFDPPKTDGKCDKCGGELYQRDDD) form an LID region. Arg127 serves as a coordination point for ATP. Zn(2+)-binding residues include Cys130, Cys133, Cys150, and Cys153. Arg160 and Arg171 together coordinate AMP. Gly199 contributes to the ATP binding site.

It belongs to the adenylate kinase family. In terms of assembly, monomer.

The protein resides in the cytoplasm. It catalyses the reaction AMP + ATP = 2 ADP. It functions in the pathway purine metabolism; AMP biosynthesis via salvage pathway; AMP from ADP: step 1/1. Functionally, catalyzes the reversible transfer of the terminal phosphate group between ATP and AMP. Plays an important role in cellular energy homeostasis and in adenine nucleotide metabolism. This Syntrophobacter fumaroxidans (strain DSM 10017 / MPOB) protein is Adenylate kinase.